A 112-amino-acid chain; its full sequence is UPF0102 protein Spea_0251 (112 aa).

Belongs to the UPF0102 family.

The chain is UPF0102 protein Spea_0251 from Shewanella pealeana (strain ATCC 700345 / ANG-SQ1).